A 216-amino-acid chain; its full sequence is Imidazole glycerol phosphate synthase subunit HisH 1 (216 aa).

A Glutamine amidotransferase type-1 domain is found at 4-216 (CVLIVDAGLG…LQNFIALNPC (213 aa)). The active-site Nucleophile is Cys-84. Catalysis depends on residues His-195 and Glu-197.

As to quaternary structure, heterodimer of HisH and HisF.

Its subcellular location is the cytoplasm. The catalysed reaction is 5-[(5-phospho-1-deoxy-D-ribulos-1-ylimino)methylamino]-1-(5-phospho-beta-D-ribosyl)imidazole-4-carboxamide + L-glutamine = D-erythro-1-(imidazol-4-yl)glycerol 3-phosphate + 5-amino-1-(5-phospho-beta-D-ribosyl)imidazole-4-carboxamide + L-glutamate + H(+). The enzyme catalyses L-glutamine + H2O = L-glutamate + NH4(+). The protein operates within amino-acid biosynthesis; L-histidine biosynthesis; L-histidine from 5-phospho-alpha-D-ribose 1-diphosphate: step 5/9. In terms of biological role, IGPS catalyzes the conversion of PRFAR and glutamine to IGP, AICAR and glutamate. The HisH subunit provides the glutamine amidotransferase activity that produces the ammonia necessary to HisF for the synthesis of IGP and AICAR. In Prochlorococcus marinus (strain MIT 9313), this protein is Imidazole glycerol phosphate synthase subunit HisH 1 (hisH1).